A 130-amino-acid polypeptide reads, in one-letter code: Organ-specific protein P4 (130 aa).

Repeat copies occupy residues His-60 to Ile-85 and His-86 to Ile-111. Residues His-60–Ile-111 form a 2 X 26 AA tandem repeats region. Positions Ala-79–Ala-130 are disordered.

This sequence to organ specific protein S2. Expressed in pods.

The protein is Organ-specific protein P4 of Pisum sativum (Garden pea).